The sequence spans 187 residues: Probable chemoreceptor glutamine deamidase CheD 1 (187 aa).

Belongs to the CheD family.

The catalysed reaction is L-glutaminyl-[protein] + H2O = L-glutamyl-[protein] + NH4(+). Probably deamidates glutamine residues to glutamate on methyl-accepting chemotaxis receptors (MCPs), playing an important role in chemotaxis. The sequence is that of Probable chemoreceptor glutamine deamidase CheD 1 from Ruegeria sp. (strain TM1040) (Silicibacter sp.).